A 270-amino-acid polypeptide reads, in one-letter code: Gap junction beta-3 protein (270 aa).

At 1–20 (MDWKKLQDLLSGVNQYSTAF) the chain is on the cytoplasmic side. A helical membrane pass occupies residues 21-40 (GRIWLSVVFVFRVLVYVVAA). Residues 41 to 75 (ERVWGDEQKDFDCNTRQPGCTNVCYDNFFPISNIR) are Extracellular-facing. The helical transmembrane segment at 76 to 98 (LWALQLIFVTCPSMLVILHVAYR) threads the bilayer. Residues 99–126 (EERERKHRQKHGEHCAKLYSHPGKKHGG) lie on the Cytoplasmic side of the membrane. A helical transmembrane segment spans residues 127–149 (LWWTYLFSLIFKLIIELVFLYVL). The Extracellular segment spans residues 150–188 (HTLWHGFTMPRLVQCASVVPCPNTVDCYIARPTEKKVFT). The helical transmembrane segment at 189–211 (YFMVGASAVCIILTICEICYLIF) threads the bilayer. The Cytoplasmic segment spans residues 212 to 270 (HRIMRGLSKDKSTKSISSPKSSSRASTCRCHHKLLESGDLEAVPADDKLQASAPSLTPI).

This sequence belongs to the connexin family. Beta-type (group I) subfamily. In terms of assembly, a connexon is composed of a hexamer of connexins. Interacts with CNST.

It is found in the cell membrane. The protein resides in the cell junction. It localises to the gap junction. One gap junction consists of a cluster of closely packed pairs of transmembrane channels, the connexons, through which materials of low MW diffuse from one cell to a neighboring cell. This is Gap junction beta-3 protein (Gjb3) from Rattus norvegicus (Rat).